The following is a 346-amino-acid chain: Holliday junction branch migration complex subunit RuvB (346 aa).

A large ATPase domain (RuvB-L) region spans residues 4–185; sequence SDRIITASPF…FGIVSRLEFY (182 aa). ATP is bound by residues Leu24, Arg25, Gly66, Lys69, Thr70, Thr71, 132–134, Arg175, Tyr185, and Arg222; that span reads EDY. Thr70 contributes to the Mg(2+) binding site. The interval 186–256 is small ATPAse domain (RuvB-S); it reads TADELGKIVT…VADAALQMLD (71 aa). Residues 259 to 346 form a head domain (RuvB-H) region; the sequence is ATGLDVLDRK…TTVPSLFDPD (88 aa). Positions 295, 314, and 319 each coordinate DNA.

This sequence belongs to the RuvB family. As to quaternary structure, homohexamer. Forms an RuvA(8)-RuvB(12)-Holliday junction (HJ) complex. HJ DNA is sandwiched between 2 RuvA tetramers; dsDNA enters through RuvA and exits via RuvB. An RuvB hexamer assembles on each DNA strand where it exits the tetramer. Each RuvB hexamer is contacted by two RuvA subunits (via domain III) on 2 adjacent RuvB subunits; this complex drives branch migration. In the full resolvosome a probable DNA-RuvA(4)-RuvB(12)-RuvC(2) complex forms which resolves the HJ.

It is found in the cytoplasm. It catalyses the reaction ATP + H2O = ADP + phosphate + H(+). Functionally, the RuvA-RuvB-RuvC complex processes Holliday junction (HJ) DNA during genetic recombination and DNA repair, while the RuvA-RuvB complex plays an important role in the rescue of blocked DNA replication forks via replication fork reversal (RFR). RuvA specifically binds to HJ cruciform DNA, conferring on it an open structure. The RuvB hexamer acts as an ATP-dependent pump, pulling dsDNA into and through the RuvAB complex. RuvB forms 2 homohexamers on either side of HJ DNA bound by 1 or 2 RuvA tetramers; 4 subunits per hexamer contact DNA at a time. Coordinated motions by a converter formed by DNA-disengaged RuvB subunits stimulates ATP hydrolysis and nucleotide exchange. Immobilization of the converter enables RuvB to convert the ATP-contained energy into a lever motion, pulling 2 nucleotides of DNA out of the RuvA tetramer per ATP hydrolyzed, thus driving DNA branch migration. The RuvB motors rotate together with the DNA substrate, which together with the progressing nucleotide cycle form the mechanistic basis for DNA recombination by continuous HJ branch migration. Branch migration allows RuvC to scan DNA until it finds its consensus sequence, where it cleaves and resolves cruciform DNA. The chain is Holliday junction branch migration complex subunit RuvB from Nitrosomonas europaea (strain ATCC 19718 / CIP 103999 / KCTC 2705 / NBRC 14298).